The sequence spans 508 residues: Histidine ammonia-lyase (508 aa).

The 5-imidazolinone (Ala-Gly) cross-link spans 141 to 143; sequence ASG. A 2,3-didehydroalanine (Ser) modification is found at serine 142.

This sequence belongs to the PAL/histidase family. Post-translationally, contains an active site 4-methylidene-imidazol-5-one (MIO), which is formed autocatalytically by cyclization and dehydration of residues Ala-Ser-Gly.

It is found in the cytoplasm. It catalyses the reaction L-histidine = trans-urocanate + NH4(+). It participates in amino-acid degradation; L-histidine degradation into L-glutamate; N-formimidoyl-L-glutamate from L-histidine: step 1/3. The sequence is that of Histidine ammonia-lyase from Geobacillus sp. (strain WCH70).